Here is a 707-residue protein sequence, read N- to C-terminus: Casein kinase 1-like protein HD16 (707 aa).

The tract at residues 19-67 (YDVQDADPAASPVSPAPRGRTGRRGGAAAGRGNKTVAEGGGRKALKPRG) is disordered. Positions 24 to 37 (ADPAASPVSPAPRG) are enriched in low complexity. In terms of domain architecture, Protein kinase spans 147-425 (YITDRKLGKG…KLISLFDGLI (279 aa)). ATP-binding positions include 153-161 (LGKGGFGQV) and Lys184. Asp276 functions as the Proton acceptor in the catalytic mechanism.

It belongs to the protein kinase superfamily. CK1 Ser/Thr protein kinase family. Casein kinase I subfamily. Monomer. Interacts with GHD7 (via C-terminus). Interacts with SLR1. Post-translationally, autophosphorylated. As to expression, expressed in roots, leaves and stems. Expressed in leaf vascular bundles, and proximal regions of the shoot and roots.

It is found in the cytoplasm. It localises to the nucleus. The catalysed reaction is L-seryl-[protein] + ATP = O-phospho-L-seryl-[protein] + ADP + H(+). It catalyses the reaction L-threonyl-[protein] + ATP = O-phospho-L-threonyl-[protein] + ADP + H(+). Casein kinases are operationally defined by their preferential utilization of acidic proteins such as caseins as substrates. It can phosphorylate a large number of proteins. Can phosphorylate casein on threonine residues in vitro. Involved in the regulation of flowering time through gibberellin (GA) signaling, and independently of photoperiod. Phosphorylates the DELLA protein SLR1, stabilizing SLR1 protein and sustaining SLR1 activity as repressor of GA signaling. Required for normal development of male floral organs and grains, through modulation of GA signaling. Targeted and repressed by the homeobox protein HAZ1 during GA signaling. Can phosphorylate phosvitin and SLR1 in vitro. Is not required for clock function in either the presence or the absence of light signals. Involved in a genetic control pathway for photoperiodic flowering under long day (LD) conditions that includes HD1, GHD7, HD5 and HD2. Phosphorylates and activates GHD7, a major floral repressor under LD conditions. Phosphorylation of GHD7 enhances its function in the repression of EHD1, HD3A and HD3B/RFT1, and obviously delaying flowering. The protein is Casein kinase 1-like protein HD16 of Oryza sativa subsp. japonica (Rice).